Consider the following 109-residue polypeptide: uncharacterized protein (109 aa).

It is found in the mitochondrion. This is an uncharacterized protein from Arabidopsis thaliana (Mouse-ear cress).